Here is a 661-residue protein sequence, read N- to C-terminus: Fusaric acid cluster transcription factor FUB12 (661 aa).

Positions 17-48 (CVPCRTRKIKCNAAVVGLPCGSCVSRECPDDC) form a DNA-binding region, zn(2)-C6 fungal-type. Disordered regions lie at residues 57-131 (TVKV…RPPG) and 151-184 (SAAQ…PQLD). A compositionally biased stretch (polar residues) spans 73–98 (PDTNGSVLSPRQQQLPTNVSRQTTDS). Positions 99 to 109 (SHSDPVEESIH) are enriched in basic and acidic residues. A compositionally biased stretch (polar residues) spans 110-119 (ASHTGSSLRN). Over residues 120 to 129 (DTPHSRDRRP) the composition is skewed to basic and acidic residues.

The protein resides in the nucleus. Its function is as follows. Efflux pump involved in export of biosynthesis of fusaric acid, a mycotoxin with low to moderate toxicity to animals and humans, but with high phytotoxic properties. Constitutes a self-protecting mechanism of the fungus against critical levels of FSA within the cell. The polypeptide is Fusaric acid cluster transcription factor FUB12 (Fusarium oxysporum f. sp. lycopersici (strain 4287 / CBS 123668 / FGSC 9935 / NRRL 34936) (Fusarium vascular wilt of tomato)).